A 1558-amino-acid chain; its full sequence is Calmodulin-regulated spectrin-associated protein 1-B (1558 aa).

In terms of domain architecture, Calponin-homology (CH) spans 231–346 (WYWKLVPVRY…FIAELFWWFE (116 aa)). Composition is skewed to polar residues over residues 400–417 (VQNS…SGFS), 440–450 (ACRNRSNSLTQ), and 504–516 (ASTV…SHPG). 7 disordered regions span residues 400 to 464 (VQNS…SDKR), 504 to 523 (ASTV…VRRI), 551 to 585 (NDIT…SDSR), 602 to 675 (AKEK…APGQ), 737 to 790 (TKEL…VASG), 803 to 850 (QRFG…QNKD), and 943 to 968 (DRSK…SSSP). The segment covering 602–620 (AKEKSISLNKEEESGEGRQ) has biased composition (basic and acidic residues). The span at 643–658 (QTLNRTFTPNTSSEFE) shows a compositional bias: polar residues. Residues 737 to 772 (TKELHPDKKQHFEEEVESAKLREDMNVKEHEDKDGG) show a composition bias toward basic and acidic residues. Composition is skewed to low complexity over residues 776–790 (SSPG…VASG) and 812–822 (RSSTSSSQRTT). Residues 849–887 (KDNANMLASELVQLHMQLEEKRRAIESQKKKMEILTARQ) are a coiled coil. Residues 943–955 (DRSKEAEEPEKAS) show a composition bias toward basic and acidic residues. The stretch at 971-1004 (VEEEVDLNECNRSIELLNEAIGSIQQQMMQLSLQ) forms a coiled coil. Disordered stretches follow at residues 1041–1131 (FVEP…TFHL), 1257–1293 (LRKQ…RREL), 1305–1344 (ELCE…KCPA), and 1360–1414 (LASV…ITST). Over residues 1080–1090 (SSTPTPTDSPS) the composition is skewed to low complexity. Residues 1106 to 1115 (DFVQSSVRSE) show a composition bias toward polar residues. A coiled-coil region spans residues 1243–1303 (AFLLKQQRKA…IKQEYLRKKQ (61 aa)). Basic residues predominate over residues 1317 to 1328 (PKTKPKKQRLKS). Residues 1421–1555 (GPKLFKEPSA…QAKRPAGPKK (135 aa)) form the CKK domain.

Belongs to the CAMSAP1 family.

It localises to the cytoplasm. Its subcellular location is the cytoskeleton. Its function is as follows. Key microtubule-organizing protein that specifically binds the minus-end of non-centrosomal microtubules and regulates their dynamics and organization. Specifically recognizes growing microtubule minus-ends and stabilizes microtubules. Acts on free microtubule minus-ends that are not capped by microtubule-nucleating proteins or other factors and protects microtubule minus-ends from depolymerization. In contrast to camsap2 and camsap3, tracks along the growing tips of minus-end microtubules without significantly affecting the polymerization rate: binds at the very tip of the microtubules minus-end and acts as a minus-end tracking protein (-TIP) that dissociates from microtubules after allowing tubulin incorporation. Through interaction with spectrin may regulate neurite outgrowth. This Danio rerio (Zebrafish) protein is Calmodulin-regulated spectrin-associated protein 1-B (camsap1b).